Reading from the N-terminus, the 1370-residue chain is DNA-directed RNA polymerase subunit beta (1370 aa).

This sequence belongs to the RNA polymerase beta chain family. The RNAP catalytic core consists of 2 alpha, 1 beta, 1 beta' and 1 omega subunit. When a sigma factor is associated with the core the holoenzyme is formed, which can initiate transcription.

It carries out the reaction RNA(n) + a ribonucleoside 5'-triphosphate = RNA(n+1) + diphosphate. Its function is as follows. DNA-dependent RNA polymerase catalyzes the transcription of DNA into RNA using the four ribonucleoside triphosphates as substrates. This Geotalea daltonii (strain DSM 22248 / JCM 15807 / FRC-32) (Geobacter daltonii) protein is DNA-directed RNA polymerase subunit beta.